The sequence spans 376 residues: Phosphoglycerate kinase (376 aa).

Residues Val-1, Asp-2, Phe-3, Asn-4, Arg-17, Ser-40, His-41, Gly-43, Arg-44, Leu-99, Arg-100, His-147, and Arg-148 each coordinate (2R)-3-phosphoglycerate. Gly-191 provides a ligand contact to ADP. Gly-191 provides a ligand contact to CDP. AMP-binding residues include Ala-192 and Lys-193. Residue Ala-192 participates in ATP binding. Position 192 (Ala-192) interacts with Mg(2+). Asp-196 contacts CDP. Asp-196 provides a ligand contact to Mg(2+). Lys-197 contacts AMP. Lys-197 contacts ATP. Position 215 (Gly-215) interacts with ADP. Gly-215 lines the CDP pocket. The AMP site is built by Gly-216 and Gly-290. Positions 216 and 290 each coordinate ATP. CDP contacts are provided by Gly-315 and Phe-320. Phe-320 contributes to the ADP binding site. Glu-321 contributes to the AMP binding site. 3 residues coordinate ATP: Glu-321, Asp-352, and Thr-353. Asp-352 contacts Mg(2+).

Belongs to the phosphoglycerate kinase family. In terms of assembly, monomer. Mg(2+) serves as cofactor.

The enzyme catalyses (2R)-3-phosphoglycerate + ATP = (2R)-3-phospho-glyceroyl phosphate + ADP. Its pathway is carbohydrate degradation; glycolysis; pyruvate from D-glyceraldehyde 3-phosphate: step 2/5. This is Phosphoglycerate kinase (PGK) from Glaucoma chattoni.